We begin with the raw amino-acid sequence, 497 residues long: Iron-sulfur cluster assembly factor IBA57, mitochondrial (497 aa).

Residues 1–27 constitute a mitochondrion transit peptide; that stretch reads MFISRRCRIKGFTLKNLLWFRSSSTRF. The disordered stretch occupies residues 414-433; sequence PTLNPFTNKPPERTKRKQRP.

It belongs to the GcvT family. CAF17/IBA57 subfamily. As to quaternary structure, interacts with CCR4, ISA1 and ISA2.

The protein resides in the mitochondrion matrix. Functionally, required for lysine and glutamate prototrophy and mitochondrial genome maintenance. Has a role in the maturation of mitochondrial aconitase-type and radical-SAM Fe/S proteins biotin synthase and lipoic acid synthase. The polypeptide is Iron-sulfur cluster assembly factor IBA57, mitochondrial (Saccharomyces cerevisiae (strain ATCC 204508 / S288c) (Baker's yeast)).